The sequence spans 207 residues: MKVSTKDKIIESAVMLFNQKGFSGTSVREIAKSADVNVAHISYYFKGKGGLMEHLVSEFYEGYSKTLETAASNISTQSTQEQLLQLVFDILSYQHNHRQLTRFVYREVTIDSTLIREIMSTYLMKEKYIFQLIIEEGEKQREYLTLPLPHFILQLKSLLMMPYLQPQYISEVLYMQPHEPYFYKMYFEEIKIWIRSVFRTGDVALTN.

The 61-residue stretch at V3–Y63 folds into the HTH tetR-type domain. Residues S26–F45 constitute a DNA-binding region (H-T-H motif).

The sequence is that of Probable HTH-type transcriptional regulator YttP (yttP) from Bacillus subtilis (strain 168).